A 148-amino-acid chain; its full sequence is Sperm-specific protein PHI-2B (148 aa).

The segment covering 1–35 (PSPSRRSRSRSRSRSKSPKRSPAKKARKTPKKRRA) has biased composition (basic residues). 2 disordered regions span residues 1-44 (PSPS…KPST) and 97-148 (GVLV…KSNN). One can recognise an H15 domain in the interval 40-119 (KKPSTLSMIV…GATGSFRVGK (80 aa)). Positions 124–148 (PKKKAKKAKSPKKKSSKKSSNKSNN) are enriched in basic residues.

Belongs to the histone H1/H5 family. In terms of tissue distribution, sperm.

The protein localises to the nucleus. It localises to the chromosome. Linker histones are implicated in chromatin remodeling and/or transcriptional regulation during spermiogenesis, the process of spermatid maturation into spermatozoa. In Mytilus californianus (California mussel), this protein is Sperm-specific protein PHI-2B.